A 142-amino-acid polypeptide reads, in one-letter code: Large ribosomal subunit protein uL13 (142 aa).

It belongs to the universal ribosomal protein uL13 family. In terms of assembly, part of the 50S ribosomal subunit.

This protein is one of the early assembly proteins of the 50S ribosomal subunit, although it is not seen to bind rRNA by itself. It is important during the early stages of 50S assembly. The polypeptide is Large ribosomal subunit protein uL13 (Acidovorax sp. (strain JS42)).